Here is a 239-residue protein sequence, read N- to C-terminus: ATP-dependent dethiobiotin synthetase BioD (239 aa).

ATP is bound at residue 15–20 (EIGKTF). Threonine 19 contributes to the Mg(2+) binding site. The active site involves lysine 40. ATP contacts are provided by residues aspartate 57, 118-121 (EGVG), and 178-179 (NH). Residues aspartate 57 and glutamate 118 each coordinate Mg(2+).

It belongs to the dethiobiotin synthetase family. Homodimer. Requires Mg(2+) as cofactor.

Its subcellular location is the cytoplasm. The catalysed reaction is (7R,8S)-7,8-diammoniononanoate + CO2 + ATP = (4R,5S)-dethiobiotin + ADP + phosphate + 3 H(+). The protein operates within cofactor biosynthesis; biotin biosynthesis; biotin from 7,8-diaminononanoate: step 1/2. Functionally, catalyzes a mechanistically unusual reaction, the ATP-dependent insertion of CO2 between the N7 and N8 nitrogen atoms of 7,8-diaminopelargonic acid (DAPA, also called 7,8-diammoniononanoate) to form a ureido ring. This is ATP-dependent dethiobiotin synthetase BioD from Burkholderia cenocepacia (strain HI2424).